The sequence spans 158 residues: MQGRSSAWLVKHELVHRSLGFDYQGIETLQIKPEDWYSIAVISYVYGYNYLRSQCAYDVAPGGLLASVYHLTRIQYGVDQPEEVCIKVFAPRGNPRIPSVFWIWKSADFQERESYDMFGISYDNHPRLKRILMPESWIGWPLRKDYIAPDFYEIQDAY.

Belongs to the complex I 30 kDa subunit family. In terms of assembly, NDH is composed of at least 16 different subunits, 5 of which are encoded in the nucleus.

The protein resides in the plastid. Its subcellular location is the chloroplast thylakoid membrane. It carries out the reaction a plastoquinone + NADH + (n+1) H(+)(in) = a plastoquinol + NAD(+) + n H(+)(out). The catalysed reaction is a plastoquinone + NADPH + (n+1) H(+)(in) = a plastoquinol + NADP(+) + n H(+)(out). Functionally, NDH shuttles electrons from NAD(P)H:plastoquinone, via FMN and iron-sulfur (Fe-S) centers, to quinones in the photosynthetic chain and possibly in a chloroplast respiratory chain. The immediate electron acceptor for the enzyme in this species is believed to be plastoquinone. Couples the redox reaction to proton translocation, and thus conserves the redox energy in a proton gradient. The sequence is that of NAD(P)H-quinone oxidoreductase subunit J, chloroplastic from Ceratophyllum demersum (Rigid hornwort).